Consider the following 336-residue polypeptide: Carbamoyl dehydratase HypE (336 aa).

Cys336 bears the S-carbamoylcysteine; by HypF; alternate mark. Residue Cys336 is modified to S-cyanocysteine; by autocatalysis; alternate.

The protein belongs to the HypE family. As to quaternary structure, homodimer. Forms a complex with HypF. Also forms a complex with HypC, or HybG, and HypD. In terms of processing, modified by HypF, which adds a carboxamido group to the thiolate of the C-terminal cysteine, yielding a protein-S-carboxamide. The carboxamido group is then dehydrated by HypE itself to yield a protein-thiocyanate.

It carries out the reaction C-terminal S-carboxamide-L-cysteinyl-[HypE protein] + ATP = C-terminal S-cyanate-L-cysteinyl-[HypE protein] + ADP + phosphate + H(+). Its pathway is protein modification; [NiFe] hydrogenase maturation. Its function is as follows. Involved in the maturation of [NiFe] hydrogenases. Along with HypF, it catalyzes the synthesis of the CN ligands of the active site iron of [NiFe]-hydrogenases. HypE catalyzes the ATP-dependent dehydration of the carboxamido group attached to its C-terminal cysteine to a cyano group. The cyano group is then transferred from HypE to the HypC-HypD complex or the HybG-HypD complex. This is Carbamoyl dehydratase HypE from Escherichia coli (strain K12).